Reading from the N-terminus, the 327-residue chain is Flotillin-like protein FloA (327 aa).

The helical transmembrane segment at 2 to 22 threads the bilayer; sequence IGLIIIVVIVLVALLLLFSFV. A disordered region spans residues 305–327; it reads ADTGMRNSINQRTNQKDDESPDK. Positions 318-327 are enriched in basic and acidic residues; it reads NQKDDESPDK.

It belongs to the flotillin-like FloA family. In terms of assembly, homooligomerizes.

Its subcellular location is the cell membrane. The protein localises to the membrane raft. In terms of biological role, found in functional membrane microdomains (FMM) that may be equivalent to eukaryotic membrane rafts. FMMs are highly dynamic and increase in number as cells age. Flotillins are thought to be important factors in membrane fluidity. This Staphylococcus saprophyticus subsp. saprophyticus (strain ATCC 15305 / DSM 20229 / NCIMB 8711 / NCTC 7292 / S-41) protein is Flotillin-like protein FloA.